The primary structure comprises 342 residues: MENRMVTPFDVEDDREQYSLRPTTLKEYIGQKKVKANLDIFIKAAKKRNESLDHVLFYGPPGLGKTTLANIIANEMTGNLKVTSGPAIEKAGDLAAILTSLTDYDVLFIDEIHRLNRSIEEILYPAMEDYALDIVIGKGAAAKSIRLDLPKFTLIGATTRVGLLTSPLRDRFGMLCAMEFYTDEELMEIVVRSAAILNVNICREAAFEIGKRSRGTPRIANRLLKRVRDYCDVKHDGDIDLQGAKAALDLLEVDKEGLDKIDNKILEAIIFNFKGGPVGLETLAYFIGEELDTIEDVYEPYLIQKGFIMRTPRGRVASEKAYNHFGVTKKEEKDNQVSIFNK.

Residues 1–181 are large ATPase domain (RuvB-L); it reads MENRMVTPFD…FGMLCAMEFY (181 aa). ATP is bound by residues L20, R21, G62, K65, T66, T67, 128–130, R171, Y181, and R218; that span reads EDY. T66 contacts Mg(2+). The small ATPAse domain (RuvB-S) stretch occupies residues 182–252; sequence TDEELMEIVV…GAKAALDLLE (71 aa). A head domain (RuvB-H) region spans residues 255–342; sequence KEGLDKIDNK…KDNQVSIFNK (88 aa). Residues R310 and R315 each coordinate DNA.

This sequence belongs to the RuvB family. Homohexamer. Forms an RuvA(8)-RuvB(12)-Holliday junction (HJ) complex. HJ DNA is sandwiched between 2 RuvA tetramers; dsDNA enters through RuvA and exits via RuvB. An RuvB hexamer assembles on each DNA strand where it exits the tetramer. Each RuvB hexamer is contacted by two RuvA subunits (via domain III) on 2 adjacent RuvB subunits; this complex drives branch migration. In the full resolvosome a probable DNA-RuvA(4)-RuvB(12)-RuvC(2) complex forms which resolves the HJ.

The protein localises to the cytoplasm. The catalysed reaction is ATP + H2O = ADP + phosphate + H(+). Its function is as follows. The RuvA-RuvB-RuvC complex processes Holliday junction (HJ) DNA during genetic recombination and DNA repair, while the RuvA-RuvB complex plays an important role in the rescue of blocked DNA replication forks via replication fork reversal (RFR). RuvA specifically binds to HJ cruciform DNA, conferring on it an open structure. The RuvB hexamer acts as an ATP-dependent pump, pulling dsDNA into and through the RuvAB complex. RuvB forms 2 homohexamers on either side of HJ DNA bound by 1 or 2 RuvA tetramers; 4 subunits per hexamer contact DNA at a time. Coordinated motions by a converter formed by DNA-disengaged RuvB subunits stimulates ATP hydrolysis and nucleotide exchange. Immobilization of the converter enables RuvB to convert the ATP-contained energy into a lever motion, pulling 2 nucleotides of DNA out of the RuvA tetramer per ATP hydrolyzed, thus driving DNA branch migration. The RuvB motors rotate together with the DNA substrate, which together with the progressing nucleotide cycle form the mechanistic basis for DNA recombination by continuous HJ branch migration. Branch migration allows RuvC to scan DNA until it finds its consensus sequence, where it cleaves and resolves cruciform DNA. This is Holliday junction branch migration complex subunit RuvB from Clostridium botulinum (strain ATCC 19397 / Type A).